We begin with the raw amino-acid sequence, 516 residues long: mRNA export factor ICP27 homolog (516 aa).

Zn(2+)-binding residues include cysteine 231, histidine 336, cysteine 338, and cysteine 343. The CHC2-type zinc finger occupies 231-343 (CVFNDNGHGD…SNHKCDDVSC (113 aa)). A compositionally biased stretch (polar residues) spans 399-409 (YSTSRDLPQTS). A disordered region spans residues 399–423 (YSTSRDLPQTSHRSHKNQGTPKVKS).

Belongs to the HHV-1 ICP27 protein family.

The protein localises to the virion tegument. It localises to the virion. The protein resides in the host nucleus. It is found in the host cytoplasm. Immediate early (EI) protein that plays many roles during productive infection including regulation of viral gene expression and nuclear export of intronless viral RNAs. The polypeptide is mRNA export factor ICP27 homolog (Homo sapiens (Human)).